Reading from the N-terminus, the 64-residue chain is Anti-sigma-G factor Gin (64 aa).

Residues Cys-11, Cys-14, Cys-30, and Cys-33 each coordinate Zn(2+).

In terms of assembly, probably functions as a homodimer. Interacts with sigma-G factor, recognition occurs via the first 71 residues of sigma-G. Requires Zn(2+) as cofactor.

Functionally, an anti-sigma-G factor, prevents premature activation of sigma-G factor in the forespore; overexpression leads to 1000-fold reduction in spore formation, spore formation stops after engulfment. Overexpression also inhibits sigma-G transcription activation activity. When both Gin and sigma-G are expressed in E.coli Gin inhibits sigma-G, strongly suggesting Gin inhibits by direct physical interaction. The polypeptide is Anti-sigma-G factor Gin (Bacillus subtilis (strain 168)).